Reading from the N-terminus, the 333-residue chain is Large ribosomal subunit protein mL44 (333 aa).

A mitochondrion-targeting transit peptide spans 1–30; it reads MASAVFRLLQQGPRRLLAPAVPTLAPPVRG. The region spanning 86-228 is the RNase III domain; that stretch reads DLLKTAFINS…LITQMTGKEL (143 aa). One can recognise a DRBM domain in the interval 236-306; sequence NPMGLLVEEL…ARVALRKLYG (71 aa). The segment covering 311-327 has biased composition (basic and acidic residues); the sequence is RRPWDYSKPKESPKRAE. Residues 311 to 333 are disordered; it reads RRPWDYSKPKESPKRAEQTSVAS.

This sequence belongs to the ribonuclease III family. Mitochondrion-specific ribosomal protein mL44 subfamily. As to quaternary structure, component of the mitochondrial ribosome large subunit (39S) which comprises a 16S rRNA and about 50 distinct proteins.

The protein localises to the mitochondrion. Component of the 39S subunit of mitochondrial ribosome. May have a function in the assembly/stability of nascent mitochondrial polypeptides exiting the ribosome. This chain is Large ribosomal subunit protein mL44 (Mrpl44), found in Mus musculus (Mouse).